The chain runs to 801 residues: Leucine--tRNA ligase (801 aa).

Positions 40-51 match the 'HIGH' region motif; it reads PYPSGAGLHVGH. A 'KMSKS' region motif is present at residues 576–580; that stretch reads KMSKS. Lys-579 is a binding site for ATP.

Belongs to the class-I aminoacyl-tRNA synthetase family.

It is found in the cytoplasm. The catalysed reaction is tRNA(Leu) + L-leucine + ATP = L-leucyl-tRNA(Leu) + AMP + diphosphate. This is Leucine--tRNA ligase from Exiguobacterium sibiricum (strain DSM 17290 / CCUG 55495 / CIP 109462 / JCM 13490 / 255-15).